Here is a 90-residue protein sequence, read N- to C-terminus: Chromosomal protein MC1c (90 aa).

Its function is as follows. Protects DNA against thermal denaturation and modulates transcription. The polypeptide is Chromosomal protein MC1c (Methanothrix soehngenii (Methanosaeta concilii)).